Here is a 352-residue protein sequence, read N- to C-terminus: A-type ATP synthase subunit C (352 aa).

It belongs to the V-ATPase V0D/AC39 subunit family. Has multiple subunits with at least A(3), B(3), C, D, E, F, H, I and proteolipid K(x).

The protein localises to the cell membrane. Its function is as follows. Component of the A-type ATP synthase that produces ATP from ADP in the presence of a proton gradient across the membrane. In Halobacterium salinarum (strain ATCC 29341 / DSM 671 / R1), this protein is A-type ATP synthase subunit C.